We begin with the raw amino-acid sequence, 142 residues long: Large ribosomal subunit protein uL11 (142 aa).

It belongs to the universal ribosomal protein uL11 family. Part of the ribosomal stalk of the 50S ribosomal subunit. Interacts with L10 and the large rRNA to form the base of the stalk. L10 forms an elongated spine to which L12 dimers bind in a sequential fashion forming a multimeric L10(L12)X complex. Post-translationally, one or more lysine residues are methylated.

Its function is as follows. Forms part of the ribosomal stalk which helps the ribosome interact with GTP-bound translation factors. The sequence is that of Large ribosomal subunit protein uL11 from Acidithiobacillus ferrooxidans (strain ATCC 23270 / DSM 14882 / CIP 104768 / NCIMB 8455) (Ferrobacillus ferrooxidans (strain ATCC 23270)).